A 274-amino-acid chain; its full sequence is MSRFIISSHSPNEEGNVVRVTPESAGWEYVGFEVYALTKGQTLRKETIDQEACLVLLKGKANIHTRHERWENIGLRMDVFEKIPPYSVYVPSNDVYEVQALTDLELAVCLAPGKGTYPARLIPPSEVGVEMRGAGNIERRIHNILPESKPADSLLVVEVFTPEGNWSSYPPHKHDQHNLPHESYLEETYYHQINPDHGFMVQRVYTDDRSIDETMVVKNGDVVLVPKGYHPVSAPPGYEGYYLNVMAGPVRTWKFRNDPDHEWVMESKLAAKQK.

It belongs to the isomerase IolB family.

The enzyme catalyses 5-deoxy-D-glucuronate = 5-dehydro-2-deoxy-D-gluconate. The protein operates within polyol metabolism; myo-inositol degradation into acetyl-CoA; acetyl-CoA from myo-inositol: step 4/7. Its function is as follows. Involved in the isomerization of 5-deoxy-glucuronate (5DG) to 5-dehydro-2-deoxy-D-gluconate (DKG or 2-deoxy-5-keto-D-gluconate). The chain is 5-deoxy-glucuronate isomerase from Geobacillus thermodenitrificans (strain NG80-2).